The sequence spans 120 residues: Large ribosomal subunit protein uL18 (120 aa).

This sequence belongs to the universal ribosomal protein uL18 family. Part of the 50S ribosomal subunit; part of the 5S rRNA/L5/L18/L25 subcomplex. Contacts the 5S and 23S rRNAs.

Functionally, this is one of the proteins that bind and probably mediate the attachment of the 5S RNA into the large ribosomal subunit, where it forms part of the central protuberance. The protein is Large ribosomal subunit protein uL18 of Picosynechococcus sp. (strain ATCC 27264 / PCC 7002 / PR-6) (Agmenellum quadruplicatum).